We begin with the raw amino-acid sequence, 298 residues long: ATP synthase gamma chain (298 aa).

The protein belongs to the ATPase gamma chain family. As to quaternary structure, F-type ATPases have 2 components, CF(1) - the catalytic core - and CF(0) - the membrane proton channel. CF(1) has five subunits: alpha(3), beta(3), gamma(1), delta(1), epsilon(1). CF(0) has three main subunits: a, b and c.

It localises to the cell inner membrane. Its function is as follows. Produces ATP from ADP in the presence of a proton gradient across the membrane. The gamma chain is believed to be important in regulating ATPase activity and the flow of protons through the CF(0) complex. The chain is ATP synthase gamma chain from Desulfosudis oleivorans (strain DSM 6200 / JCM 39069 / Hxd3) (Desulfococcus oleovorans).